A 250-amino-acid polypeptide reads, in one-letter code: MRLLSGASASRIPCPLLSLARARARCLPVPASATACRAASSSAAAAAGDGGALKPWLFVGLGNPGKVYQGTRHNVGFEMIDVIAEAEGISLSSMQFKAMVGKGRIGDAPIMLAKPQTFMNASGESVGQLVSYFKIPLNQVLVMYDDLDLPFAKLRLLPKGGHGGHNGVRSIINHLKQNRDFPRLRIGIGRPPGKMDPANFVLRPFNRKEQEELDFAFHRGLEAVRIMALEGFNKSATYVNTAQSSEMLNR.

The N-terminal 45 residues, M1–A45, are a transit peptide targeting the mitochondrion. TRNA is bound at residue Y68. H73 serves as the catalytic Proton acceptor. Positions 118, 120, and 166 each coordinate tRNA.

The protein belongs to the PTH family.

The protein localises to the mitochondrion. The enzyme catalyses an N-acyl-L-alpha-aminoacyl-tRNA + H2O = an N-acyl-L-amino acid + a tRNA + H(+). Its function is as follows. The natural substrate for this enzyme may be peptidyl-tRNAs which drop off the ribosome during protein synthesis. The chain is Peptidyl-tRNA hydrolase, mitochondrial from Oryza sativa subsp. japonica (Rice).